Here is a 755-residue protein sequence, read N- to C-terminus: 17S U2 SnRNP complex component HTATSF1 (755 aa).

2 disordered regions span residues 1–53 (MSGT…YEWD) and 81–122 (GASS…KAES). An N-acetylserine modification is found at Ser2. A compositionally biased stretch (basic and acidic residues) spans 90-122 (EDVHARTAEEPPQEKAPEPTDARKKGEKRKAES). RRM domains are found at residues 133–218 (TNVY…VAKF) and 264–349 (RVVI…AWDG). The tract at residues 259–353 (RMRHERVVII…AQAWDGTTDY (95 aa)) is U2AF homology motif (UHM). The residue at position 297 (Lys297) is an N6-acetyllysine. Positions 380–415 (RGLRRSDSVSASERAGPSRARHFSEHPSTSKMNAQE) are disordered. The interval 381–755 (GLRRSDSVSA…LSSDDDDDDI (375 aa)) is mediates interaction with the P-TEFb complex. Residues Ser387, Ser403, Ser407, and Ser409 each carry the phosphoserine modification. Positions 405–415 (HPSTSKMNAQE) are enriched in polar residues. Glycyl lysine isopeptide (Lys-Gly) (interchain with G-Cter in SUMO2) cross-links involve residues Lys429 and Lys430. The segment at 433 to 755 (KTEDGGEFEE…LSSDDDDDDI (323 aa)) is disordered. 3 positions are modified to phosphoserine: Ser445, Ser452, and Ser453. Positions 462-476 (CPEKESEEGCPKRGF) are enriched in basic and acidic residues. Phosphoserine occurs at positions 481, 485, 494, 498, 521, and 529. A compositionally biased stretch (basic and acidic residues) spans 508–538 (LKNDCEENGLAKESEDDLNKESEEEVGPTKE). Residues 539–552 (SEEDDSEKESDEDC) show a composition bias toward acidic residues. Basic and acidic residues predominate over residues 553 to 563 (SEKQSEDGSER). 3 positions are modified to phosphoserine: Ser557, Ser561, and Ser579. Over residues 564-579 (EFEENGLEKDLDEEGS) the composition is skewed to acidic residues. Over residues 580-590 (EKELHENVLDK) the composition is skewed to basic and acidic residues. Acidic residues predominate over residues 591 to 606 (ELEENDSENSEFEDDG). Phosphoserine is present on residues Ser597, Ser600, Ser607, Ser616, and Ser624. Acidic residues-rich tracts occupy residues 613–633 (EEGS…EEDT) and 640–651 (DESDEKEDEEYA). Thr633 carries the post-translational modification Phosphothreonine. A Phosphoserine modification is found at Ser642. Basic and acidic residues predominate over residues 652-674 (DEKGLEAADKKAEEGDADEKLFE). Residues 675–713 (ESDDKEDEDADGKEVEDADEKLFEDDDSNEKLFDEEEDS) show a composition bias toward acidic residues. Ser676, Ser702, Ser713, Ser714, and Ser721 each carry phosphoserine. Over residues 714-725 (SEKLFDDSDERG) the composition is skewed to basic and acidic residues. At Ser748 the chain carries Phosphoserine; by CK2.

It belongs to the HTATSF1 family. As to quaternary structure, component of the 17S U2 SnRNP complex, a ribonucleoprotein complex that contains small nuclear RNA (snRNA) U2 and a number of specific proteins. Within the 17S U2 SnRNP complex, interacts (via UHM region) directly with SF3B1. Component of a complex which is at least composed of HTATSF1/Tat-SF1, the P-TEFb complex components CDK9 and CCNT1, RNA polymerase II, SUPT5H, and NCL/nucleolin. Interacts with GTF2F2/RAP30 and POLR2A. Interacts with TCERG1/CA150. Interacts with (poly-ADP-ribosylated) RPA1; promoting HTATSF1 recruitment to DNA damage sites. Interacts (when phosphorylated) with TOPBP1; promoting recruitment of TOPBP1 to DNA damage sites during S-phase. Post-translationally, phosphorylation at Ser-748 by CK2 during S-phase in response to DNA damage promotes interaction with TOPBP1 and double-strand break (DSB) repair via homologous recombination. Widely expressed.

It is found in the nucleus. The protein localises to the chromosome. Component of the 17S U2 SnRNP complex of the spliceosome, a large ribonucleoprotein complex that removes introns from transcribed pre-mRNAs. The 17S U2 SnRNP complex (1) directly participates in early spliceosome assembly and (2) mediates recognition of the intron branch site during pre-mRNA splicing by promoting the selection of the pre-mRNA branch-site adenosine, the nucleophile for the first step of splicing. Within the 17S U2 SnRNP complex, HTATSF1 is required to stabilize the branchpoint-interacting stem loop. HTATSF1 is displaced from the 17S U2 SnRNP complex before the stable addition of the 17S U2 SnRNP complex to the spliceosome, destabilizing the branchpoint-interacting stem loop and allowing to probe intron branch site sequences. Also acts as a regulator of transcriptional elongation, possibly by mediating the reciprocal stimulatory effect of splicing on transcriptional elongation. Involved in double-strand break (DSB) repair via homologous recombination in S-phase by promoting the recruitment of TOPBP1 to DNA damage sites. Mechanistically, HTATSF1 is (1) recruited to DNA damage sites in S-phase via interaction with poly-ADP-ribosylated RPA1 and (2) phosphorylated by CK2, promoting recruitment of TOPBP1, thereby facilitating RAD51 nucleofilaments formation and RPA displacement, followed by homologous recombination. Its function is as follows. (Microbial infection) In case of infection by HIV-1, it is up-regulated by the HIV-1 proteins NEF and gp120, acts as a cofactor required for the Tat-enhanced transcription of the virus. The protein is 17S U2 SnRNP complex component HTATSF1 of Homo sapiens (Human).